Reading from the N-terminus, the 224-residue chain is Deoxyribose-phosphate aldolase (224 aa).

The active-site Proton donor/acceptor is the Asp-92. Residue Lys-155 is the Schiff-base intermediate with acetaldehyde of the active site. Lys-184 serves as the catalytic Proton donor/acceptor.

Belongs to the DeoC/FbaB aldolase family. DeoC type 1 subfamily.

The protein localises to the cytoplasm. The enzyme catalyses 2-deoxy-D-ribose 5-phosphate = D-glyceraldehyde 3-phosphate + acetaldehyde. It participates in carbohydrate degradation; 2-deoxy-D-ribose 1-phosphate degradation; D-glyceraldehyde 3-phosphate and acetaldehyde from 2-deoxy-alpha-D-ribose 1-phosphate: step 2/2. Its function is as follows. Catalyzes a reversible aldol reaction between acetaldehyde and D-glyceraldehyde 3-phosphate to generate 2-deoxy-D-ribose 5-phosphate. The sequence is that of Deoxyribose-phosphate aldolase from Shouchella clausii (strain KSM-K16) (Alkalihalobacillus clausii).